The primary structure comprises 134 residues: Aspartate 1-decarboxylase (134 aa).

Serine 25 acts as the Schiff-base intermediate with substrate; via pyruvic acid in catalysis. Serine 25 carries the pyruvic acid (Ser) modification. Residue threonine 57 coordinates substrate. The active-site Proton donor is the tyrosine 58. A substrate-binding site is contributed by 73–75; sequence GAA.

This sequence belongs to the PanD family. Heterooctamer of four alpha and four beta subunits. The cofactor is pyruvate. Is synthesized initially as an inactive proenzyme, which is activated by self-cleavage at a specific serine bond to produce a beta-subunit with a hydroxyl group at its C-terminus and an alpha-subunit with a pyruvoyl group at its N-terminus.

It localises to the cytoplasm. The catalysed reaction is L-aspartate + H(+) = beta-alanine + CO2. Its pathway is cofactor biosynthesis; (R)-pantothenate biosynthesis; beta-alanine from L-aspartate: step 1/1. Its function is as follows. Catalyzes the pyruvoyl-dependent decarboxylation of aspartate to produce beta-alanine. This is Aspartate 1-decarboxylase from Citrifermentans bemidjiense (strain ATCC BAA-1014 / DSM 16622 / JCM 12645 / Bem) (Geobacter bemidjiensis).